Consider the following 243-residue polypeptide: 3-deoxy-manno-octulosonate cytidylyltransferase (243 aa).

This sequence belongs to the KdsB family.

It localises to the cytoplasm. The catalysed reaction is 3-deoxy-alpha-D-manno-oct-2-ulosonate + CTP = CMP-3-deoxy-beta-D-manno-octulosonate + diphosphate. The protein operates within nucleotide-sugar biosynthesis; CMP-3-deoxy-D-manno-octulosonate biosynthesis; CMP-3-deoxy-D-manno-octulosonate from 3-deoxy-D-manno-octulosonate and CTP: step 1/1. It participates in bacterial outer membrane biogenesis; lipopolysaccharide biosynthesis. Functionally, activates KDO (a required 8-carbon sugar) for incorporation into bacterial lipopolysaccharide in Gram-negative bacteria. The sequence is that of 3-deoxy-manno-octulosonate cytidylyltransferase from Bartonella henselae (strain ATCC 49882 / DSM 28221 / CCUG 30454 / Houston 1) (Rochalimaea henselae).